A 292-amino-acid polypeptide reads, in one-letter code: Forkhead box protein R1 (292 aa).

2 disordered regions span residues 31–50 and 65–166; these read PPKL…PDYE and PGKL…ASSQ. 2 stretches are compositionally biased toward basic and acidic residues: residues 35–47 and 70–79; these read PLEK…KDGP and VSGRRKREDL. Residues 80–89 are compositionally biased toward polar residues; sequence TSTLPSSQPP. A compositionally biased stretch (acidic residues) spans 129–140; the sequence is LTEEEEAEDQED. A compositionally biased stretch (basic residues) spans 149–161; the sequence is PHKRAPLQSRRLR. A DNA-binding region (fork-head) is located at residues 173–272; that stretch reads RPPLNYFHLI…EEARALASTR (100 aa).

As to expression, expressed in testis (at protein level).

The protein resides in the nucleus. Its subcellular location is the cytoplasm. The protein localises to the perinuclear region. Its function is as follows. Transcription factor which acts as both an activator and a repressor. Activates transcription of a number of genes including the heat shock chaperones HSPA1A and HSPA6 and the antioxidant NADPH-dependent reductase DHRS2 which are involved in protection against oxidative stress. Required for normal brain development. This is Forkhead box protein R1 (FOXR1) from Homo sapiens (Human).